A 1374-amino-acid polypeptide reads, in one-letter code: DNA-directed RNA polymerase subunit beta (1374 aa).

The protein belongs to the RNA polymerase beta chain family. As to quaternary structure, the RNAP catalytic core consists of 2 alpha, 1 beta, 1 beta' and 1 omega subunit. When a sigma factor is associated with the core the holoenzyme is formed, which can initiate transcription.

It catalyses the reaction RNA(n) + a ribonucleoside 5'-triphosphate = RNA(n+1) + diphosphate. In terms of biological role, DNA-dependent RNA polymerase catalyzes the transcription of DNA into RNA using the four ribonucleoside triphosphates as substrates. The chain is DNA-directed RNA polymerase subunit beta from Rhodopseudomonas palustris (strain TIE-1).